A 148-amino-acid chain; its full sequence is C-C motif chemokine 2 (148 aa).

A signal peptide spans 1–23; sequence MQVPVMLLGLLFTVAGWSIHVLA. Position 24 is a pyrrolidone carboxylic acid (Gln24). 2 cysteine pairs are disulfide-bonded: Cys34-Cys59 and Cys35-Cys75. N-linked (GlcNAc...) asparagine glycosylation is present at Asn126.

The protein belongs to the intercrine beta (chemokine CC) family. As to quaternary structure, monomer or homodimer; in equilibrium. Is tethered on endothelial cells by glycosaminoglycan (GAG) side chains of proteoglycans. Interacts with TNFAIP6 (via Link domain). Post-translationally, processing at the N-terminus can regulate receptor and target cell selectivity. Deletion of the N-terminal residue converts it from an activator of basophil to an eosinophil chemoattractant. In terms of processing, N-Glycosylated.

The protein localises to the secreted. In terms of biological role, acts as a ligand for C-C chemokine receptor CCR2. Signals through binding and activation of CCR2 and induces a strong chemotactic response and mobilization of intracellular calcium ions. Exhibits a chemotactic activity for monocytes and basophils but not neutrophils or eosinophils. Plays an important role in mediating peripheral nerve injury-induced neuropathic pain. Increases NMDA-mediated synaptic transmission in both dopamine D1 and D2 receptor-containing neurons, which may be caused by MAPK/ERK-dependent phosphorylation of GRIN2B/NMDAR2B. The polypeptide is C-C motif chemokine 2 (Ccl2) (Mus musculus (Mouse)).